The chain runs to 299 residues: ATP phosphoribosyltransferase (299 aa).

This sequence belongs to the ATP phosphoribosyltransferase family. Long subfamily. The cofactor is Mg(2+).

Its subcellular location is the cytoplasm. It carries out the reaction 1-(5-phospho-beta-D-ribosyl)-ATP + diphosphate = 5-phospho-alpha-D-ribose 1-diphosphate + ATP. It participates in amino-acid biosynthesis; L-histidine biosynthesis; L-histidine from 5-phospho-alpha-D-ribose 1-diphosphate: step 1/9. Its activity is regulated as follows. Feedback inhibited by histidine. Catalyzes the condensation of ATP and 5-phosphoribose 1-diphosphate to form N'-(5'-phosphoribosyl)-ATP (PR-ATP). Has a crucial role in the pathway because the rate of histidine biosynthesis seems to be controlled primarily by regulation of HisG enzymatic activity. In Shewanella loihica (strain ATCC BAA-1088 / PV-4), this protein is ATP phosphoribosyltransferase.